The sequence spans 414 residues: 3-isopropylmalate dehydratase large subunit (414 aa).

[4Fe-4S] cluster contacts are provided by C295, C353, and C356.

Belongs to the aconitase/IPM isomerase family. LeuC type 2 subfamily. As to quaternary structure, heterodimer of LeuC and LeuD. Requires [4Fe-4S] cluster as cofactor.

It catalyses the reaction (2R,3S)-3-isopropylmalate = (2S)-2-isopropylmalate. It functions in the pathway amino-acid biosynthesis; L-leucine biosynthesis; L-leucine from 3-methyl-2-oxobutanoate: step 2/4. Its function is as follows. Catalyzes the isomerization between 2-isopropylmalate and 3-isopropylmalate, via the formation of 2-isopropylmaleate. The sequence is that of 3-isopropylmalate dehydratase large subunit from Pyrobaculum islandicum (strain DSM 4184 / JCM 9189 / GEO3).